The following is a 60-amino-acid chain: MAKHPVPKKKTSKSKRDMRRSHHALTVPAMNDCPQCHGKKLSHHICPNCGYYDGRQVLAV.

The span at 1-23 (MAKHPVPKKKTSKSKRDMRRSHH) shows a compositional bias: basic residues. The interval 1–26 (MAKHPVPKKKTSKSKRDMRRSHHALT) is disordered.

The protein belongs to the bacterial ribosomal protein bL32 family.

This is Large ribosomal subunit protein bL32 from Deinococcus deserti (strain DSM 17065 / CIP 109153 / LMG 22923 / VCD115).